We begin with the raw amino-acid sequence, 191 residues long: Zinc finger protein GIS2 (191 aa).

Residues 55–77 (FKCHYCFRNFPTSQALGGHQNAH) form a C2H2-type zinc finger.

As to expression, expressed in inflorescence meristems, floral meristems and stem epidermis.

Its subcellular location is the nucleus. Probable transcription factor required for the initiation of inflorescence trichomes in response to gibberellin and cytokinin. Is not involved in the regulation of trichome branching. Is functionally equivalent to ZFP8. The protein is Zinc finger protein GIS2 (GIS2) of Arabidopsis thaliana (Mouse-ear cress).